The primary structure comprises 215 residues: HTH-type transcriptional repressor FabR (215 aa).

Positions 10–70 constitute an HTH tetR-type domain; sequence KTRRSLVEAA…TMVDESGLML (61 aa). The H-T-H motif DNA-binding region spans 33-52; the sequence is SLREVAREAGIAPTSFYRHF.

In terms of assembly, homodimer.

It localises to the cytoplasm. Functionally, represses the transcription of fabB, involved in unsaturated fatty acid (UFA) biosynthesis. By controlling UFA production, FabR directly influences the physical properties of the membrane bilayer. This chain is HTH-type transcriptional repressor FabR, found in Escherichia coli O1:K1 / APEC.